Here is a 77-residue protein sequence, read N- to C-terminus: uncharacterized protein (77 aa).

Residues 54–77 (HHGRKHKEDMEARHEQLTKGGTIL) are disordered. Basic and acidic residues predominate over residues 59–70 (HKEDMEARHEQL).

This is an uncharacterized protein from Escherichia coli O157:H7.